We begin with the raw amino-acid sequence, 127 residues long: Aspartate 1-decarboxylase (127 aa).

Catalysis depends on Ser25, which acts as the Schiff-base intermediate with substrate; via pyruvic acid. Pyruvic acid (Ser) is present on Ser25. Thr57 contacts substrate. Tyr58 functions as the Proton donor in the catalytic mechanism. Residue 73–75 (GAA) participates in substrate binding.

The protein belongs to the PanD family. In terms of assembly, heterooctamer of four alpha and four beta subunits. Pyruvate is required as a cofactor. Post-translationally, is synthesized initially as an inactive proenzyme, which is activated by self-cleavage at a specific serine bond to produce a beta-subunit with a hydroxyl group at its C-terminus and an alpha-subunit with a pyruvoyl group at its N-terminus.

The protein resides in the cytoplasm. The enzyme catalyses L-aspartate + H(+) = beta-alanine + CO2. It functions in the pathway cofactor biosynthesis; (R)-pantothenate biosynthesis; beta-alanine from L-aspartate: step 1/1. In terms of biological role, catalyzes the pyruvoyl-dependent decarboxylation of aspartate to produce beta-alanine. The sequence is that of Aspartate 1-decarboxylase from Desulfitobacterium hafniense (strain DSM 10664 / DCB-2).